Consider the following 159-residue polypeptide: UPF0587 protein v1g245604 (159 aa).

Positions 33, 36, 67, and 70 each coordinate Zn(2+).

Belongs to the UPF0587 family.

The polypeptide is UPF0587 protein v1g245604 (Nematostella vectensis (Starlet sea anemone)).